The following is a 353-amino-acid chain: Photosystem II D2 protein (353 aa).

Thr2 carries the post-translational modification N-acetylthreonine. Thr2 bears the Phosphothreonine mark. Residues 41–61 (CAYFALGGWFTGTTFVTSWYT) traverse the membrane as a helical segment. His118 contributes to the chlorophyll a binding site. Residues 125 to 141 (GFMLRQFELARSVQLRP) form a helical membrane-spanning segment. Residues Gln130 and Asn143 each contribute to the pheophytin a site. The helical transmembrane segment at 153–166 (VFVSVFLIYPLGQS) threads the bilayer. His198 is a chlorophyll a binding site. A helical transmembrane segment spans residues 208 to 228 (AALLCAIHGATVENTLFEDGD). His215 and Phe262 together coordinate a plastoquinone. Residue His215 coordinates Fe cation. Residue His269 coordinates Fe cation. A helical transmembrane segment spans residues 279–295 (GLWMSAIGVVGLALNLR).

It belongs to the reaction center PufL/M/PsbA/D family. As to quaternary structure, PSII is composed of 1 copy each of membrane proteins PsbA, PsbB, PsbC, PsbD, PsbE, PsbF, PsbH, PsbI, PsbJ, PsbK, PsbL, PsbM, PsbT, PsbX, PsbY, PsbZ, Psb30/Ycf12, at least 3 peripheral proteins of the oxygen-evolving complex and a large number of cofactors. It forms dimeric complexes. Requires The D1/D2 heterodimer binds P680, chlorophylls that are the primary electron donor of PSII, and subsequent electron acceptors. It shares a non-heme iron and each subunit binds pheophytin, quinone, additional chlorophylls, carotenoids and lipids. There is also a Cl(-1) ion associated with D1 and D2, which is required for oxygen evolution. The PSII complex binds additional chlorophylls, carotenoids and specific lipids. as cofactor.

The protein resides in the plastid. The protein localises to the chloroplast thylakoid membrane. The enzyme catalyses 2 a plastoquinone + 4 hnu + 2 H2O = 2 a plastoquinol + O2. Functionally, photosystem II (PSII) is a light-driven water:plastoquinone oxidoreductase that uses light energy to abstract electrons from H(2)O, generating O(2) and a proton gradient subsequently used for ATP formation. It consists of a core antenna complex that captures photons, and an electron transfer chain that converts photonic excitation into a charge separation. The D1/D2 (PsbA/PsbD) reaction center heterodimer binds P680, the primary electron donor of PSII as well as several subsequent electron acceptors. D2 is needed for assembly of a stable PSII complex. The protein is Photosystem II D2 protein of Phalaenopsis aphrodite subsp. formosana (Moth orchid).